The chain runs to 960 residues: Isoleucine--tRNA ligase (960 aa).

The 'HIGH' region signature appears at 60–70 (PYANGSLHIGH). Glu-573 contacts L-isoleucyl-5'-AMP. The short motif at 614–618 (KMSKS) is the 'KMSKS' region element. Lys-617 lines the ATP pocket. Residues Cys-929, Cys-932, Cys-949, and Cys-952 each coordinate Zn(2+).

It belongs to the class-I aminoacyl-tRNA synthetase family. IleS type 1 subfamily. In terms of assembly, monomer. It depends on Zn(2+) as a cofactor.

It is found in the cytoplasm. It catalyses the reaction tRNA(Ile) + L-isoleucine + ATP = L-isoleucyl-tRNA(Ile) + AMP + diphosphate. Functionally, catalyzes the attachment of isoleucine to tRNA(Ile). As IleRS can inadvertently accommodate and process structurally similar amino acids such as valine, to avoid such errors it has two additional distinct tRNA(Ile)-dependent editing activities. One activity is designated as 'pretransfer' editing and involves the hydrolysis of activated Val-AMP. The other activity is designated 'posttransfer' editing and involves deacylation of mischarged Val-tRNA(Ile). In Nostoc sp. (strain PCC 7120 / SAG 25.82 / UTEX 2576), this protein is Isoleucine--tRNA ligase.